We begin with the raw amino-acid sequence, 122 residues long: Histone H2B.1 (122 aa).

Positions 1–10 (MAPKKAPAAA) are enriched in low complexity. Residues 1–28 (MAPKKAPAAAAEKKVKKAPTTEKKNKKK) are disordered. Residue Ala-2 is modified to N,N,N-trimethylalanine. Lys-5 and Lys-42 each carry N6-acetyllysine. Residue Lys-116 forms a Glycyl lysine isopeptide (Lys-Gly) (interchain with G-Cter in ubiquitin) linkage.

The protein belongs to the histone H2B family. In terms of assembly, the nucleosome is a histone octamer containing two molecules each of H2A, H2B, H3 and H4 assembled in one H3-H4 heterotetramer and two H2A-H2B heterodimers. The octamer wraps approximately 147 bp of DNA. Post-translationally, acetylation occurs almost exclusively in the MAC. In terms of processing, monoubiquitination to form H2BK115ub1 gives a specific tag for epigenetic transcriptional activation and is also prerequisite for H3K4me and H3K79me formation.

It localises to the nucleus. The protein localises to the chromosome. Core component of nucleosome. Nucleosomes wrap and compact DNA into chromatin, limiting DNA accessibility to the cellular machineries which require DNA as a template. Histones thereby play a central role in transcription regulation, DNA repair, DNA replication and chromosomal stability. DNA accessibility is regulated via a complex set of post-translational modifications of histones, also called histone code, and nucleosome remodeling. The protein is Histone H2B.1 (HTB1) of Tetrahymena thermophila (strain SB210).